The chain runs to 121 residues: Basic phospholipase A2 homolog piratoxin-2 (121 aa).

7 disulfides stabilise this stretch: cysteine 26-cysteine 115, cysteine 28-cysteine 44, cysteine 43-cysteine 95, cysteine 49-cysteine 121, cysteine 50-cysteine 88, cysteine 57-cysteine 81, and cysteine 75-cysteine 86. The interval lysine 105 to lysine 117 is important for membrane-damaging activities in eukaryotes and bacteria; heparin-binding.

The protein belongs to the phospholipase A2 family. Group II subfamily. K49 sub-subfamily. As to quaternary structure, homodimer; non-covalently linked. In terms of tissue distribution, expressed by the venom gland.

Its subcellular location is the secreted. In terms of biological role, snake venom phospholipase A2 (PLA2) homolog that lacks enzymatic activity. Shows myotoxic activity and edema-inducing activities in vivo. A model of myotoxic mechanism has been proposed: an apo Lys49-PLA2 is activated by the entrance of a hydrophobic molecule (e.g. fatty acid) at the hydrophobic channel of the protein leading to a reorientation of a monomer. This reorientation causes a transition between 'inactive' to 'active' states, causing alignment of C-terminal and membrane-docking sites (MDoS) side-by-side and putting the membrane-disruption sites (MDiS) in the same plane, exposed to solvent and in a symmetric position for both monomers. The MDoS region stabilizes the toxin on membrane by the interaction of charged residues with phospholipid head groups. Subsequently, the MDiS region destabilizes the membrane with penetration of hydrophobic residues. This insertion causes a disorganization of the membrane, allowing an uncontrolled influx of ions (i.e. calcium and sodium), and eventually triggering irreversible intracellular alterations and cell death. In Bothrops pirajai (Piraja's lancehead), this protein is Basic phospholipase A2 homolog piratoxin-2.